The primary structure comprises 185 residues: RING-H2 finger protein ATL8 (185 aa).

A helical membrane pass occupies residues 28–48; that stretch reads LVLILAVLLCALTCIIGLIAV. The RING-type; atypical zinc-finger motif lies at 104–146; the sequence is CAICLTEFAAGDELRVLPQCGHGFHVSCIDTWLGSHSSCPSCR. A disordered region spans residues 161 to 185; the sequence is PGSSSSGPEPDTRIKQREDGPDNLP. Residues 170–185 show a composition bias toward basic and acidic residues; that stretch reads PDTRIKQREDGPDNLP.

The protein belongs to the RING-type zinc finger family. ATL subfamily.

The protein resides in the membrane. It carries out the reaction S-ubiquitinyl-[E2 ubiquitin-conjugating enzyme]-L-cysteine + [acceptor protein]-L-lysine = [E2 ubiquitin-conjugating enzyme]-L-cysteine + N(6)-ubiquitinyl-[acceptor protein]-L-lysine.. Its pathway is protein modification; protein ubiquitination. This Arabidopsis thaliana (Mouse-ear cress) protein is RING-H2 finger protein ATL8 (ATL8).